Reading from the N-terminus, the 128-residue chain is MKGYGWGIGSVVLVTVAQLILKWGMMNTPLMSLADINGQFVFNHLPQFIAVICGLAGYALSMLCWFFALRYLPLNRAYPLLSLSYALVYLGAVSLPWFSESATLLKTLGAGFILLGIWLINTKPIAKD.

At Met1–Gly5 the chain is on the cytoplasmic side. Residues Trp6 to Met26 traverse the membrane as a helical segment. The Periplasmic segment spans residues Asn27–Gln47. The helical transmembrane segment at Phe48 to Ala68 threads the bilayer. Residues Leu69 to Ala77 lie on the Cytoplasmic side of the membrane. Residues Tyr78–Phe98 form a helical membrane-spanning segment. Over Ser99–Ser101 the chain is Periplasmic. Residues Ala102–Thr122 traverse the membrane as a helical segment. The Cytoplasmic segment spans residues Lys123–Asp128.

This sequence belongs to the ArnF family. In terms of assembly, heterodimer of ArnE and ArnF.

It localises to the cell inner membrane. It participates in bacterial outer membrane biogenesis; lipopolysaccharide biosynthesis. Its function is as follows. Translocates 4-amino-4-deoxy-L-arabinose-phosphoundecaprenol (alpha-L-Ara4N-phosphoundecaprenol) from the cytoplasmic to the periplasmic side of the inner membrane. This Yersinia enterocolitica serotype O:8 / biotype 1B (strain NCTC 13174 / 8081) protein is Probable 4-amino-4-deoxy-L-arabinose-phosphoundecaprenol flippase subunit ArnF.